We begin with the raw amino-acid sequence, 337 residues long: Oligopeptide transport ATP-binding protein OppD (337 aa).

The ABC transporter domain maps to 20 to 269 (LNVKDLRVTF…PVHPYSIGLL (250 aa)). 56–63 (GESGSGKS) serves as a coordination point for ATP.

This sequence belongs to the ABC transporter superfamily. As to quaternary structure, the complex is composed of two ATP-binding proteins (OppD and OppF), two transmembrane proteins (OppB and OppC) and a solute-binding protein (OppA or MppA).

The protein resides in the cell inner membrane. The catalysed reaction is a [peptide](out) + ATP + H2O = a [peptide](in) + ADP + phosphate + H(+). The enzyme catalyses L-alanyl-gamma-D-glutamyl-meso-2,6-diaminopimelate(out) + ATP + H2O = L-alanyl-gamma-D-glutamyl-meso-2,6-diaminopimelate(in) + ADP + phosphate + H(+). Its function is as follows. Part of the ABC transporter complex OppABCDF involved in the uptake of oligopeptides and of the ABC transporter complex MppA-OppBCDF involved in the uptake of the cell wall murein tripeptide L-alanyl-gamma-D-glutamyl-meso-diaminopimelate. Probably responsible for energy coupling to the transport system. Plays an important nutritional role and is involved in the recycling of cell wall peptides. The protein is Oligopeptide transport ATP-binding protein OppD (oppD) of Escherichia coli (strain K12).